The following is a 351-amino-acid chain: Photosystem II D2 protein (351 aa).

The helical transmembrane segment at 39 to 59 (TAYLAIGGWLTGTTFVTSWYT) threads the bilayer. H116 provides a ligand contact to chlorophyll a. A helical transmembrane segment spans residues 123–139 (GFMLRQFEISRLVGIRP). Pheophytin a contacts are provided by Q128 and N141. Residues 151-164 (VFVSVFLIYPLGQS) form a helical membrane-spanning segment. H196 lines the chlorophyll a pocket. Residues 206–226 (GALLSAIHGVTVENTLYEDGE) traverse the membrane as a helical segment. A plastoquinone is bound by residues H213 and F260. Position 213 (H213) interacts with Fe cation. Residue H267 coordinates Fe cation. The chain crosses the membrane as a helical span at residues 277-293 (GLWTSSIGIIGLALNLR).

This sequence belongs to the reaction center PufL/M/PsbA/D family. As to quaternary structure, PSII is composed of 1 copy each of membrane proteins PsbA, PsbB, PsbC, PsbD, PsbE, PsbF, PsbH, PsbI, PsbJ, PsbK, PsbL, PsbM, PsbT, PsbX, PsbY, PsbZ, Psb30/Ycf12, peripheral proteins PsbO, CyanoQ (PsbQ), PsbU, PsbV and a large number of cofactors. It forms dimeric complexes. The cofactor is The D1/D2 heterodimer binds P680, chlorophylls that are the primary electron donor of PSII, and subsequent electron acceptors. It shares a non-heme iron and each subunit binds pheophytin, quinone, additional chlorophylls, carotenoids and lipids. There is also a Cl(-1) ion associated with D1 and D2, which is required for oxygen evolution. The PSII complex binds additional chlorophylls, carotenoids and specific lipids..

The protein resides in the host cellular thylakoid membrane. The catalysed reaction is 2 a plastoquinone + 4 hnu + 2 H2O = 2 a plastoquinol + O2. Its function is as follows. Photosystem II (PSII) is a light-driven water:plastoquinone oxidoreductase that uses light energy to abstract electrons from H(2)O, generating O(2) and a proton gradient subsequently used for ATP formation. It consists of a core antenna complex that captures photons, and an electron transfer chain that converts photonic excitation into a charge separation. The D1/D2 (PsbA/PsbD) reaction center heterodimer binds P680, the primary electron donor of PSII as well as several subsequent electron acceptors. D2 is needed for assembly of a stable PSII complex. This is Photosystem II D2 protein (psbD) from Synechococcus.